A 444-amino-acid polypeptide reads, in one-letter code: Mitogen-activated protein kinase mpk-1 (444 aa).

Polar residues-rich tracts occupy residues 1–17 (MPTW…TTRN) and 24–56 (GHPQ…HVRQ). The interval 1–56 (MPTWIPNNLCAQPTTRNAKPPSNGHPQATQQQSAPGSLAYRNSSNIPNGATNHVRQ) is disordered. A Protein kinase domain is found at 96–384 (YVNLSYIGEG…IEQALAHPYL (289 aa)). ATP is bound by residues 102–110 (IGEGAYGMV) and Lys125. Asp220 (proton acceptor) is an active-site residue. Position 256 is a phosphothreonine (Thr256). Positions 256–258 (TEY) match the TXY motif. Position 258 is a phosphotyrosine (Tyr258).

The protein belongs to the protein kinase superfamily. CMGC Ser/Thr protein kinase family. MAP kinase subfamily. As to quaternary structure, isoform a interacts with gck-1 (via N-terminus). The cofactor is Mg(2+). In terms of processing, isoform a is phosphorylated at the pachytene stage during oogenesis and is negatively regulated by gck-1. Isoform b is phosphorylated in proximal oocytes. As to expression, expressed in cells lining the rectum. Isoform a is expressed in nervous system, body wall muscles and posterior intestine. Isoform b expression may be restricted to germline.

The catalysed reaction is L-seryl-[protein] + ATP = O-phospho-L-seryl-[protein] + ADP + H(+). The enzyme catalyses L-threonyl-[protein] + ATP = O-phospho-L-threonyl-[protein] + ADP + H(+). Its activity is regulated as follows. Activated by dual phosphorylation at Thr-256 and Tyr-258. May be inactivated by lip-1-mediated dephosphorylation. In terms of biological role, functions in let-60 Ras signaling pathway; acts downstream of lin-45 raf kinase, but before the lin-1 gene product in controlling vulval cell differentiation. Plays a negative role in proximal germline proliferation in the mitotic zone. Required for progression of developing oocytes through the pachytene stage, perhaps acting after efl-1/dpl-1-mediated gene activation and before gld-1 down-regulation. May play a role in global X chromosome reactivation or be indirectly required for progression of germ cells through meiosis to the point where X reactivation occurs. In oocytes, inhibits the activity of the chloride channel clh-3, likely by activating gck-3. Plays a role in response to M.nematophilum-mediated bacterial infection by promoting tail swelling and preventing constipation. Involved in fluid homeostasis. In addition, involved in the up-regulation of lysozyme ilys-3 expression in the intestine in responses to M.nematophilum-mediated bacterial infection. By phosphorylating transcription factor skn-1 (isoform c) may play a role in increasing life span downstream of lin-45, let-60 and mek-2. By up-regulating cep-1 and down-regulating gld-1 expression in the late pachytene stage, plays a role in germline apoptosis in response to DNA damage. Regulates egl-1 expression in response to DNA damage, probably upstream of cep-1. Functionally, suppresses germline tumor formation by preventing the dedifferentiation of secondary spermatocytes probably upstream of rskn-1. The sequence is that of Mitogen-activated protein kinase mpk-1 (mpk-1) from Caenorhabditis elegans.